Consider the following 315-residue polypeptide: tRNA dimethylallyltransferase (315 aa).

14-21 (GATATGKS) is an ATP binding site. A substrate-binding site is contributed by 16–21 (TATGKS). Residues 39 to 42 (DSRQ) are interaction with substrate tRNA.

It belongs to the IPP transferase family. In terms of assembly, monomer. It depends on Mg(2+) as a cofactor.

The catalysed reaction is adenosine(37) in tRNA + dimethylallyl diphosphate = N(6)-dimethylallyladenosine(37) in tRNA + diphosphate. Functionally, catalyzes the transfer of a dimethylallyl group onto the adenine at position 37 in tRNAs that read codons beginning with uridine, leading to the formation of N6-(dimethylallyl)adenosine (i(6)A). This is tRNA dimethylallyltransferase from Microcystis aeruginosa (strain NIES-843 / IAM M-2473).